Consider the following 229-residue polypeptide: Small ribosomal subunit protein uS3 (229 aa).

Residues 39–107 enclose the KH type-2 domain; sequence VRQFLIKELK…PAQINISEVR (69 aa).

Belongs to the universal ribosomal protein uS3 family. As to quaternary structure, part of the 30S ribosomal subunit. Forms a tight complex with proteins S10 and S14.

Binds the lower part of the 30S subunit head. Binds mRNA in the 70S ribosome, positioning it for translation. The sequence is that of Small ribosomal subunit protein uS3 from Photobacterium profundum (strain SS9).